We begin with the raw amino-acid sequence, 603 residues long: MAYFRLYAVLLAVASSVAAVKVNPLPAPRHISWGHSGPKPLSDVSLRTERDTDDSILTNAWNRAWETIVSLEWVPAGIEAPIPEFDEFPTSTPSASAAATRSKRANVPIQFVDVDVEDWDADLQHGVDESYTLDAKAGSDAIDITAKTVWGALHAFTTLQQLVISDGNGGLILEQPVHIKDAPLYPYRGLMVDTGRNFISVRKLHEQLDGMALSKLNVLHWHLDDTQSWPVHIDAYPEMTKDAYSARETYSHDDLRNVVAYARARGIRVIPEIDMPAHSASGWQQVDPDIVACANSWWSNDNWPLHTAVQPNPGQLDIINPKTYEVVQDVYEELSSIFTDDWFHVGGDEIQPNCYNFSTYVTEWFQEDPSRTYNDLMQHWVDKAVPIFRSVSDSRRLVMWEDVVLNTEHADDVPTDIVMQSWNNGLENINKLTERGYDVIVSSADFMYLDCGRGGYVTNDDRYNEQTNPDPDTPSFNYGGIGGSWCGPYKTWQRIYNYDFTLNLTNAQAKHVIGATAPLWSEQVDDVNISNLFWPRAAALAELVWSGNRDAKGNKRTTLFTQRILNFREYLLANGVMAATVVPKYCLQHPHACDLNYDQTVLH.

A signal peptide spans 1-19; it reads MAYFRLYAVLLAVASSVAA. Catalysis depends on charge relay system residues Asp-225, His-278, and Glu-349. The cysteines at positions 293 and 354 are disulfide-linked. Residue Asn-356 is glycosylated (N-linked (GlcNAc...) asparagine). A disulfide bond links Cys-451 and Cys-486. N-linked (GlcNAc...) asparagine glycosylation is found at Asn-503 and Asn-528. A disulfide bridge links Cys-586 with Cys-593.

It belongs to the glycosyl hydrolase 20 family. As to quaternary structure, homodimer.

It localises to the secreted. The catalysed reaction is Hydrolysis of terminal non-reducing N-acetyl-D-hexosamine residues in N-acetyl-beta-D-hexosaminides.. In terms of biological role, part of the binary chitinolytic system. Involved in hydrolysis of chitobiose and higher chito-oligomers (produced from cell wall chitin by endochitinases), thus contributing to the formation of germ tubes, fruit-bodies and septa during hyphenation. Hydrolyzes synthetic substrates p-nitrophenyl-beta-N-acetyl-glucosamine (pNP-beta-GlcNAc), p-nitrophenyl-beta-N-acetyl-galactosamine (pNP-beta-GalNAc) and 5-bromo-4-chloro-3-indoyl-beta-D-N-glucosaminide (X-GlcNAc). In Emericella nidulans (Aspergillus nidulans), this protein is Beta-hexosaminidase.